The following is a 163-amino-acid chain: Nucleotide-binding protein Spro_1084 (163 aa).

This sequence belongs to the YajQ family.

In terms of biological role, nucleotide-binding protein. The sequence is that of Nucleotide-binding protein Spro_1084 from Serratia proteamaculans (strain 568).